A 55-amino-acid chain; its full sequence is Large ribosomal subunit protein bL33 (55 aa).

It belongs to the bacterial ribosomal protein bL33 family.

The polypeptide is Large ribosomal subunit protein bL33 (Methylobacterium nodulans (strain LMG 21967 / CNCM I-2342 / ORS 2060)).